We begin with the raw amino-acid sequence, 253 residues long: 2-C-methyl-D-erythritol 4-phosphate cytidylyltransferase (253 aa).

The interval 1-28 (MSVSSRPGRRRFALIPSAGTGTRAGGDL) is disordered.

Belongs to the IspD/TarI cytidylyltransferase family. IspD subfamily.

It catalyses the reaction 2-C-methyl-D-erythritol 4-phosphate + CTP + H(+) = 4-CDP-2-C-methyl-D-erythritol + diphosphate. The protein operates within isoprenoid biosynthesis; isopentenyl diphosphate biosynthesis via DXP pathway; isopentenyl diphosphate from 1-deoxy-D-xylulose 5-phosphate: step 2/6. Functionally, catalyzes the formation of 4-diphosphocytidyl-2-C-methyl-D-erythritol from CTP and 2-C-methyl-D-erythritol 4-phosphate (MEP). The chain is 2-C-methyl-D-erythritol 4-phosphate cytidylyltransferase from Ralstonia nicotianae (strain ATCC BAA-1114 / GMI1000) (Ralstonia solanacearum).